Consider the following 260-residue polypeptide: Thiazole synthase (260 aa).

Lysine 102 (schiff-base intermediate with DXP) is an active-site residue. 1-deoxy-D-xylulose 5-phosphate contacts are provided by residues glycine 163, 189–190, and 211–212; these read AG and NT.

It belongs to the ThiG family. As to quaternary structure, homotetramer. Forms heterodimers with either ThiH or ThiS.

The protein localises to the cytoplasm. The catalysed reaction is [ThiS sulfur-carrier protein]-C-terminal-Gly-aminoethanethioate + 2-iminoacetate + 1-deoxy-D-xylulose 5-phosphate = [ThiS sulfur-carrier protein]-C-terminal Gly-Gly + 2-[(2R,5Z)-2-carboxy-4-methylthiazol-5(2H)-ylidene]ethyl phosphate + 2 H2O + H(+). It participates in cofactor biosynthesis; thiamine diphosphate biosynthesis. In terms of biological role, catalyzes the rearrangement of 1-deoxy-D-xylulose 5-phosphate (DXP) to produce the thiazole phosphate moiety of thiamine. Sulfur is provided by the thiocarboxylate moiety of the carrier protein ThiS. In vitro, sulfur can be provided by H(2)S. This chain is Thiazole synthase, found in Geobacter sulfurreducens (strain ATCC 51573 / DSM 12127 / PCA).